The chain runs to 276 residues: NH(3)-dependent NAD(+) synthetase (276 aa).

Residue 43-50 coordinates ATP; sequence GISGGVDS. Asp49 is a binding site for Mg(2+). Residue Arg146 participates in deamido-NAD(+) binding. ATP is bound at residue Thr166. Glu171 contacts Mg(2+). Positions 179 and 186 each coordinate deamido-NAD(+). 2 residues coordinate ATP: Lys195 and Thr217. 266–267 is a binding site for deamido-NAD(+); it reads HK.

This sequence belongs to the NAD synthetase family. In terms of assembly, homodimer.

It carries out the reaction deamido-NAD(+) + NH4(+) + ATP = AMP + diphosphate + NAD(+) + H(+). It participates in cofactor biosynthesis; NAD(+) biosynthesis; NAD(+) from deamido-NAD(+) (ammonia route): step 1/1. Catalyzes the ATP-dependent amidation of deamido-NAD to form NAD. Uses ammonia as a nitrogen source. This is NH(3)-dependent NAD(+) synthetase from Aliivibrio fischeri (strain ATCC 700601 / ES114) (Vibrio fischeri).